We begin with the raw amino-acid sequence, 375 residues long: Odorant receptor 49b (375 aa).

The Cytoplasmic portion of the chain corresponds to methionine 1–arginine 28. A helical transmembrane segment spans residues tyrosine 29 to threonine 49. The Extracellular portion of the chain corresponds to asparagine 50 to serine 60. Residues tyrosine 61–leucine 77 traverse the membrane as a helical segment. Residues alanine 78–arginine 121 lie on the Cytoplasmic side of the membrane. Residues glycine 122 to serine 142 form a helical membrane-spanning segment. Residues glutamate 143–methionine 176 are Extracellular-facing. A helical membrane pass occupies residues glycine 177–valine 197. The Cytoplasmic segment spans residues arginine 198–methionine 251. Residues phenylalanine 252–isoleucine 272 traverse the membrane as a helical segment. The Extracellular segment spans residues valine 273–glutamine 278. The helical transmembrane segment at leucine 279–tyrosine 299 threads the bilayer. The Cytoplasmic portion of the chain corresponds to alanine 300–alanine 342. A helical transmembrane segment spans residues isoleucine 343 to threonine 363. The Extracellular portion of the chain corresponds to tyrosine 364–glycine 375.

Belongs to the insect chemoreceptor superfamily. Heteromeric odorant receptor channel (TC 1.A.69) family. Or30a subfamily. In terms of assembly, interacts with Orco. Complexes exist early in the endomembrane system in olfactory sensory neurons (OSNs), coupling these complexes to the conserved ciliary trafficking pathway. As to expression, expressed in olfactory sensory neurons in the antenna.

Its subcellular location is the cell membrane. Its function is as follows. Odorant receptor which mediates acceptance or avoidance behavior, depending on its substrates. The odorant receptor repertoire encodes a large collection of odor stimuli that vary widely in identity, intensity, and duration. May form a complex with Orco to form odorant-sensing units, providing sensitive and prolonged odorant signaling and calcium permeability. The protein is Odorant receptor 49b (Or49b) of Drosophila melanogaster (Fruit fly).